The following is a 344-amino-acid chain: Ion-translocating oxidoreductase complex subunit D (344 aa).

The next 4 helical transmembrane spans lie at 23-43 (LVLG…GAGT), 44-64 (LLNL…MLAL), 80-100 (VTAL…LTLV), and 120-140 (PFNP…LEMT). Residue Thr172 is modified to FMN phosphoryl threonine. Transmembrane regions (helical) follow at residues 198–218 (LGGA…LFLL), 222–242 (LFTW…SLLF), 252–272 (GSPL…FIVT), 285–305 (LLFG…GGYP), and 306–326 (DGVA…DYYT).

This sequence belongs to the NqrB/RnfD family. In terms of assembly, the complex is composed of six subunits: RnfA, RnfB, RnfC, RnfD, RnfE and RnfG. FMN serves as cofactor.

The protein localises to the cell inner membrane. Its function is as follows. Part of a membrane-bound complex that couples electron transfer with translocation of ions across the membrane. The protein is Ion-translocating oxidoreductase complex subunit D of Pseudomonas paraeruginosa (strain DSM 24068 / PA7) (Pseudomonas aeruginosa (strain PA7)).